Here is a 60-residue protein sequence, read N- to C-terminus: Potassium channel toxin ImKTx88 (60 aa).

Positions 1 to 22 are cleaved as a signal peptide; it reads MSNFSVFLIALLFCSVFILSEA. Disulfide bonds link Cys30-Cys51, Cys36-Cys56, and Cys40-Cys58.

The protein belongs to the short scorpion toxin superfamily. Potassium channel inhibitor family. Expressed by the venom gland.

Its subcellular location is the secreted. Recombinant toxin selectively inhibits Kv1.3/KCNA3 potassium channels with an IC(50) of 91 pM. The protein is Potassium channel toxin ImKTx88 of Isometrus maculatus (Lesser brown scorpion).